A 310-amino-acid chain; its full sequence is MMSNNMPRHFLDLTELPTSELRNMLSAAVAMKAKRKANADGEKPLAGKTLAMIFDKPSTRTRVSFDVGMRQLGGESIMLTGAEMQLGRGETIADTARVLSRFVDIIMIRILNHEALLELAANATVPVINGLTRKSHPCQVMADVMTFEEHRGPIKGRTIAWTGDDNNVLASFAHAAQRFEFKLNIATPPQLSPSKALRDWIKASGAAITIGTDPEEAVRGADCVVTDTWVSMGDKDGEHRHNLLKPYQVNAKLMSLAHKDAIFMHCLPAHRGEEVTDEVIDGPQSVVFDEAENRLHAQKGILAWCLGAVA.

Carbamoyl phosphate contacts are provided by residues 58–61 (STRT), Gln85, Arg109, and 136–139 (HPCQ). L-ornithine contacts are provided by residues Asn167, Asp227, and 231-232 (SM). Carbamoyl phosphate contacts are provided by residues 266 to 267 (CL) and Arg294.

It belongs to the aspartate/ornithine carbamoyltransferase superfamily. OTCase family.

Its subcellular location is the cytoplasm. It carries out the reaction carbamoyl phosphate + L-ornithine = L-citrulline + phosphate + H(+). The protein operates within amino-acid biosynthesis; L-arginine biosynthesis; L-arginine from L-ornithine and carbamoyl phosphate: step 1/3. Its function is as follows. Reversibly catalyzes the transfer of the carbamoyl group from carbamoyl phosphate (CP) to the N(epsilon) atom of ornithine (ORN) to produce L-citrulline. This is Ornithine carbamoyltransferase from Rhodopseudomonas palustris (strain ATCC BAA-98 / CGA009).